Here is a 282-residue protein sequence, read N- to C-terminus: uncharacterized protein (282 aa).

4 consecutive transmembrane segments (helical) span residues 130–150, 170–190, 191–211, and 223–243; these read WALLCVGIAQIALGTVQGFGL, STSWSIALGVIMVGAALWPSA, AAGLAGVLTAFVAILTGYVIV, and ILTHLPVVIGAVLAIMVWRSA. The interval 263-282 is disordered; it reads DNASRGRRRGHLWPTDGSAA.

The protein resides in the cell membrane. This is an uncharacterized protein from Mycobacterium tuberculosis (strain CDC 1551 / Oshkosh).